A 246-amino-acid polypeptide reads, in one-letter code: MLLIPAIDLKDGQCVRLRQGAMDDATIFSDDPVKVAAHWRDQGARRLHLVDLNGAFAGKPKNLAVIRDILGEVGEDMPVQLGGGIRDLDTIEAYLDMGLAYVIIGTAAVKTPGFLHDACDAFPGQVIVGLDAKDGMVAIDGWAKITNHNVIDLAKRFEDYGVNSVIYTDIGRDGMMTGVNIEATVKLAQALTIPVIASGGLTNLDDIRALCAVEDEGIEGAITGRAIYEGSIDFAAAQTLADELAG.

Asp8 acts as the Proton acceptor in catalysis. The active-site Proton donor is the Asp131.

This sequence belongs to the HisA/HisF family.

Its subcellular location is the cytoplasm. The enzyme catalyses 1-(5-phospho-beta-D-ribosyl)-5-[(5-phospho-beta-D-ribosylamino)methylideneamino]imidazole-4-carboxamide = 5-[(5-phospho-1-deoxy-D-ribulos-1-ylimino)methylamino]-1-(5-phospho-beta-D-ribosyl)imidazole-4-carboxamide. It participates in amino-acid biosynthesis; L-histidine biosynthesis; L-histidine from 5-phospho-alpha-D-ribose 1-diphosphate: step 4/9. The sequence is that of 1-(5-phosphoribosyl)-5-[(5-phosphoribosylamino)methylideneamino] imidazole-4-carboxamide isomerase from Chromobacterium violaceum (strain ATCC 12472 / DSM 30191 / JCM 1249 / CCUG 213 / NBRC 12614 / NCIMB 9131 / NCTC 9757 / MK).